The sequence spans 204 residues: Ribosomal RNA small subunit methyltransferase G (204 aa).

S-adenosyl-L-methionine-binding positions include Gly74, Leu79, 125–126 (AY), and Arg138.

This sequence belongs to the methyltransferase superfamily. RNA methyltransferase RsmG family.

The protein resides in the cytoplasm. Functionally, specifically methylates the N7 position of a guanine in 16S rRNA. In Brachyspira hyodysenteriae (strain ATCC 49526 / WA1), this protein is Ribosomal RNA small subunit methyltransferase G.